We begin with the raw amino-acid sequence, 195 residues long: Anthranilate synthase component 2 (195 aa).

Positions 1-195 (MILIIDNYDS…LKNFLSLSYG (195 aa)) constitute a Glutamine amidotransferase type-1 domain. Residue 52-54 (GPG) coordinates L-glutamine. Cysteine 79 acts as the Nucleophile; for GATase activity in catalysis. L-glutamine is bound by residues glutamine 83 and 129 to 130 (SL). Active-site residues include histidine 173 and glutamate 175.

Tetramer of two components I and two components II.

The protein resides in the plastid. The protein localises to the chloroplast. It carries out the reaction chorismate + L-glutamine = anthranilate + pyruvate + L-glutamate + H(+). It participates in amino-acid biosynthesis; L-tryptophan biosynthesis; L-tryptophan from chorismate: step 1/5. The chain is Anthranilate synthase component 2 (trpG) from Cyanidium caldarium (Red alga).